Reading from the N-terminus, the 344-residue chain is Dihydroorotase (344 aa).

Residues His13 and His15 each coordinate Zn(2+). Substrate contacts are provided by residues 15–17 (HVR) and Asn41. Residues Lys99, His136, and His174 each contribute to the Zn(2+) site. N6-carboxylysine is present on Lys99. His136 lines the substrate pocket. Substrate is bound at residue Leu219. Residue Asp247 participates in Zn(2+) binding. The active site involves Asp247. Residues His251 and Ala263 each coordinate substrate.

Belongs to the metallo-dependent hydrolases superfamily. DHOase family. Class II DHOase subfamily. Homodimer. It depends on Zn(2+) as a cofactor.

The catalysed reaction is (S)-dihydroorotate + H2O = N-carbamoyl-L-aspartate + H(+). The protein operates within pyrimidine metabolism; UMP biosynthesis via de novo pathway; (S)-dihydroorotate from bicarbonate: step 3/3. Its function is as follows. Catalyzes the reversible cyclization of carbamoyl aspartate to dihydroorotate. This is Dihydroorotase from Azoarcus sp. (strain BH72).